The sequence spans 711 residues: Putative membrane protein IgaA homolog (711 aa).

Met1 is a topological domain (periplasmic). Residues 2–22 (STIVIFLAALLACSLLAGWLI) form a helical membrane-spanning segment. The Cytoplasmic segment spans residues 23 to 204 (KVRSRRRQLP…YALSRPRGLR (182 aa)). Helical transmembrane passes span 205-225 (EALLIVASFLMFFFCLITPDV) and 226-246 (FVPWLAGGALLLLGAGLWGLF). The Cytoplasmic segment spans residues 247–339 (APPAKSSLRE…KNFPLQHWLR (93 aa)). Residues 340–360 (STIIAAGSLLVLFMLLFWIPL) form a helical membrane-spanning segment. Topologically, residues 361–655 (DMPLKFTLSW…IPDRSGLWRY (295 aa)) are periplasmic. Residues 656–676 (LSTTLLLLTMLGSAIYNGVQA) traverse the membrane as a helical segment. Residues 677 to 711 (WRRYQRHRTRMMKIQAYYESCLNPQLITPSESLIE) lie on the Cytoplasmic side of the membrane.

Belongs to the IgaA family.

The protein resides in the cell inner membrane. The protein is Putative membrane protein IgaA homolog (yrfF) of Escherichia coli O157:H7.